The chain runs to 895 residues: Splicing factor 3B subunit 2 (895 aa).

A compositionally biased stretch (basic and acidic residues) spans Met-1–Lys-10. Disordered stretches follow at residues Met-1–Tyr-24, Leu-65–Gly-136, Ala-197–Thr-373, and Lys-400–Lys-453. Residue Lys-10 forms a Glycyl lysine isopeptide (Lys-Gly) (interchain with G-Cter in SUMO2) linkage. The SAP domain maps to Tyr-24–Thr-58. Composition is skewed to pro residues over residues Ile-90–Gly-114 and Ala-122–Leu-133. A coiled-coil region spans residues Ala-140–Met-199. A compositionally biased stretch (low complexity) spans Pro-218–Pro-238. An omega-N-methylarginine mark is found at Arg-222, Arg-245, and Arg-247. Over residues Ala-241–Gly-254 the composition is skewed to pro residues. Lys-275 is modified (N6-acetyllysine). Positions Leu-277–Glu-286 are enriched in basic and acidic residues. Lys-280 is covalently cross-linked (Glycyl lysine isopeptide (Lys-Gly) (interchain with G-Cter in SUMO2)). Phosphoserine is present on Ser-289. Thr-298 is modified (phosphothreonine). Phosphoserine occurs at positions 307 and 309. Thr-311 bears the Phosphothreonine mark. Residue Ser-317 is modified to Phosphoserine. Over residues Glu-322–Arg-338 the composition is skewed to basic residues. Positions Ser-347 to Gly-359 are enriched in basic and acidic residues. Phosphoserine is present on residues Ser-360 and Ser-362. Residues Lys-400 and Lys-412 each participate in a glycyl lysine isopeptide (Lys-Gly) (interchain with G-Cter in SUMO2) cross-link. Basic and acidic residues-rich tracts occupy residues Lys-400–Glu-414 and Lys-422–Ser-431. Residues Lys-401–Lys-550 are required for interaction with PRMT9. Residues Ser-431, Ser-435, and Ser-436 each carry the phosphoserine modification. Lys-492 participates in a covalent cross-link: Glycyl lysine isopeptide (Lys-Gly) (interchain with G-Cter in SUMO2). Arg-508 is modified (omega-N-methylarginine; by PRMT9; alternate). A Symmetric dimethylarginine; by PRMT9; alternate modification is found at Arg-508. Arg-515 is subject to Omega-N-methylarginine. A Glycyl lysine isopeptide (Lys-Gly) (interchain with G-Cter in SUMO2) cross-link involves residue Lys-543. Residues Ala-691–Gly-757 form a disordered region. Positions Glu-712–Pro-732 are enriched in acidic residues. A Glycyl lysine isopeptide (Lys-Gly) (interchain with G-Cter in SUMO2) cross-link involves residue Lys-770. Position 780 is a phosphothreonine (Thr-780). Residues Lys-790, Lys-843, and Lys-857 each participate in a glycyl lysine isopeptide (Lys-Gly) (interchain with G-Cter in SUMO2) cross-link. Residues Tyr-844 to Ala-869 are compositionally biased toward basic and acidic residues. The segment at Tyr-844–Phe-895 is disordered. The residue at position 861 (Ser-861) is a Phosphoserine.

Component of the 17S U2 SnRNP complex, a ribonucleoprotein complex that contains small nuclear RNA (snRNA) U2 and a number of specific proteins. Part of the SF3B subcomplex of the 17S U2 SnRNP complex. SF3B associates with the splicing subcomplex SF3A and a 12S RNA unit to form the U2 small nuclear ribonucleoproteins complex (U2 snRNP). Within the SF3B complex, interacts directly with SF3B4. Found in a complex with PRMT9, SF3B2 and SF3B4. Interacts (Arg-508-methylated form) with SMN1 (via Tudor domain). Interacts with RBM7. Interacts with ERCC6. Component of the minor spliceosome. Within this complex, interacts with SCNM1 and CRIPT. As to quaternary structure, (Microbial infection) Interacts with HIV-1 Vpr. In terms of processing, methylation at Arg-508 by PRMT9 is required for the interaction with SMN1.

Its subcellular location is the nucleus. The protein resides in the nucleus speckle. Its function is as follows. Component of the 17S U2 SnRNP complex of the spliceosome, a large ribonucleoprotein complex that removes introns from transcribed pre-mRNAs. The 17S U2 SnRNP complex (1) directly participates in early spliceosome assembly and (2) mediates recognition of the intron branch site during pre-mRNA splicing by promoting the selection of the pre-mRNA branch-site adenosine, the nucleophile for the first step of splicing. Within the 17S U2 SnRNP complex, SF3B2 is part of the SF3B subcomplex, which is required for 'A' complex assembly formed by the stable binding of U2 snRNP to the branchpoint sequence in pre-mRNA. Sequence independent binding of SF3A and SF3B subcomplexes upstream of the branch site is essential, it may anchor U2 snRNP to the pre-mRNA. May also be involved in the assembly of the 'E' complex. Also acts as a component of the minor spliceosome, which is involved in the splicing of U12-type introns in pre-mRNAs. This is Splicing factor 3B subunit 2 (SF3B2) from Homo sapiens (Human).